Reading from the N-terminus, the 453-residue chain is Bifunctional protein GlmU (453 aa).

Positions 1 to 226 (MSLNVVILAA…AMEVEGANNR (226 aa)) are pyrophosphorylase. UDP-N-acetyl-alpha-D-glucosamine-binding positions include 8 to 11 (LAAG), Lys-22, Gln-73, 78 to 79 (GT), 100 to 102 (YGD), Gly-137, Glu-151, Asn-166, and Asn-224. Asp-102 is a Mg(2+) binding site. Residue Asn-224 coordinates Mg(2+). A linker region spans residues 227–247 (VQLAQLERSYQKMQAERLMIA). The interval 248–453 (GATLIDPARF…QNWARPVKKK (206 aa)) is N-acetyltransferase. UDP-N-acetyl-alpha-D-glucosamine is bound by residues Arg-330 and Lys-348. His-360 serves as the catalytic Proton acceptor. UDP-N-acetyl-alpha-D-glucosamine is bound by residues Tyr-363 and Asn-374. Acetyl-CoA contacts are provided by residues Ala-377, 383 to 384 (NY), Ser-402, Ala-420, and Arg-437.

In the N-terminal section; belongs to the N-acetylglucosamine-1-phosphate uridyltransferase family. It in the C-terminal section; belongs to the transferase hexapeptide repeat family. Homotrimer. Mg(2+) is required as a cofactor.

The protein localises to the cytoplasm. The catalysed reaction is alpha-D-glucosamine 1-phosphate + acetyl-CoA = N-acetyl-alpha-D-glucosamine 1-phosphate + CoA + H(+). It carries out the reaction N-acetyl-alpha-D-glucosamine 1-phosphate + UTP + H(+) = UDP-N-acetyl-alpha-D-glucosamine + diphosphate. Its pathway is nucleotide-sugar biosynthesis; UDP-N-acetyl-alpha-D-glucosamine biosynthesis; N-acetyl-alpha-D-glucosamine 1-phosphate from alpha-D-glucosamine 6-phosphate (route II): step 2/2. It participates in nucleotide-sugar biosynthesis; UDP-N-acetyl-alpha-D-glucosamine biosynthesis; UDP-N-acetyl-alpha-D-glucosamine from N-acetyl-alpha-D-glucosamine 1-phosphate: step 1/1. The protein operates within bacterial outer membrane biogenesis; LPS lipid A biosynthesis. Functionally, catalyzes the last two sequential reactions in the de novo biosynthetic pathway for UDP-N-acetylglucosamine (UDP-GlcNAc). The C-terminal domain catalyzes the transfer of acetyl group from acetyl coenzyme A to glucosamine-1-phosphate (GlcN-1-P) to produce N-acetylglucosamine-1-phosphate (GlcNAc-1-P), which is converted into UDP-GlcNAc by the transfer of uridine 5-monophosphate (from uridine 5-triphosphate), a reaction catalyzed by the N-terminal domain. In Aeromonas hydrophila subsp. hydrophila (strain ATCC 7966 / DSM 30187 / BCRC 13018 / CCUG 14551 / JCM 1027 / KCTC 2358 / NCIMB 9240 / NCTC 8049), this protein is Bifunctional protein GlmU.